Here is a 149-residue protein sequence, read N- to C-terminus: Deoxyuridine 5'-triphosphate nucleotidohydrolase (149 aa).

Substrate-binding positions include Arg-66–Gly-68, Asn-79, Thr-83–Asp-85, and Lys-93.

Belongs to the dUTPase family. Requires Mg(2+) as cofactor.

The enzyme catalyses dUTP + H2O = dUMP + diphosphate + H(+). It participates in pyrimidine metabolism; dUMP biosynthesis; dUMP from dCTP (dUTP route): step 2/2. In terms of biological role, this enzyme is involved in nucleotide metabolism: it produces dUMP, the immediate precursor of thymidine nucleotides and it decreases the intracellular concentration of dUTP so that uracil cannot be incorporated into DNA. The sequence is that of Deoxyuridine 5'-triphosphate nucleotidohydrolase from Corynebacterium glutamicum (strain ATCC 13032 / DSM 20300 / JCM 1318 / BCRC 11384 / CCUG 27702 / LMG 3730 / NBRC 12168 / NCIMB 10025 / NRRL B-2784 / 534).